We begin with the raw amino-acid sequence, 257 residues long: Acetylglutamate kinase (257 aa).

Residues 43-44, arginine 65, and asparagine 157 each bind substrate; that span reads GG.

Belongs to the acetylglutamate kinase family. ArgB subfamily.

It is found in the cytoplasm. It carries out the reaction N-acetyl-L-glutamate + ATP = N-acetyl-L-glutamyl 5-phosphate + ADP. Its pathway is amino-acid biosynthesis; L-arginine biosynthesis; N(2)-acetyl-L-ornithine from L-glutamate: step 2/4. Functionally, catalyzes the ATP-dependent phosphorylation of N-acetyl-L-glutamate. The protein is Acetylglutamate kinase of Mannheimia succiniciproducens (strain KCTC 0769BP / MBEL55E).